We begin with the raw amino-acid sequence, 98 residues long: Nuclear protein 2 (98 aa).

Over residues 1-11 (MEPAAPTVQPR) the composition is skewed to low complexity. 2 disordered regions span residues 1 to 24 (MEPA…PPVG) and 78 to 98 (LNSQ…TRLT). The segment covering 81–98 (QRKRRQRQLQPRPRTRLT) has biased composition (basic residues).

Belongs to the NUPR family.

The protein resides in the nucleus. Its function is as follows. Acts as a transcriptional repressor by inhibiting gene expression at the NUPR1 promoter in a p53/TP53-dependent manner in cancer cells. Involved in the G1 cell cycle arrest, and in a decrease in cell viability and cell proliferation. Plays a role as a negative regulator of the protumoral factor NUPR1. The protein is Nuclear protein 2 of Bos taurus (Bovine).